Reading from the N-terminus, the 142-residue chain is Nucleoside diphosphate kinase (142 aa).

The ATP site is built by Lys-11, Phe-59, Arg-87, Thr-93, Arg-107, and Asn-117. Catalysis depends on His-120, which acts as the Pros-phosphohistidine intermediate.

Belongs to the NDK family. Homotetramer. Requires Mg(2+) as cofactor.

Its subcellular location is the cytoplasm. The catalysed reaction is a 2'-deoxyribonucleoside 5'-diphosphate + ATP = a 2'-deoxyribonucleoside 5'-triphosphate + ADP. It catalyses the reaction a ribonucleoside 5'-diphosphate + ATP = a ribonucleoside 5'-triphosphate + ADP. Its function is as follows. Major role in the synthesis of nucleoside triphosphates other than ATP. The ATP gamma phosphate is transferred to the NDP beta phosphate via a ping-pong mechanism, using a phosphorylated active-site intermediate. This chain is Nucleoside diphosphate kinase, found in Aquifex aeolicus (strain VF5).